The sequence spans 121 residues: Small ribosomal subunit protein uS13 (121 aa).

Positions 94–121 (GLPVRGQSSKTNARTVKGPRKTVANKKK) are disordered. The span at 110 to 121 (KGPRKTVANKKK) shows a compositional bias: basic residues.

The protein belongs to the universal ribosomal protein uS13 family. As to quaternary structure, part of the 30S ribosomal subunit. Forms a loose heterodimer with protein S19. Forms two bridges to the 50S subunit in the 70S ribosome.

Located at the top of the head of the 30S subunit, it contacts several helices of the 16S rRNA. In the 70S ribosome it contacts the 23S rRNA (bridge B1a) and protein L5 of the 50S subunit (bridge B1b), connecting the 2 subunits; these bridges are implicated in subunit movement. Contacts the tRNAs in the A and P-sites. This chain is Small ribosomal subunit protein uS13, found in Mesoplasma florum (strain ATCC 33453 / NBRC 100688 / NCTC 11704 / L1) (Acholeplasma florum).